The primary structure comprises 614 residues: Threonine--tRNA ligase (614 aa).

An editing domain region spans residues 1 to 138; that stretch reads MRTLMIHSDY…HPLSELSRTI (138 aa). The interval 133–157 is disordered; that stretch reads ELSRTITTEPEEESEDSEEEPSEPS. Over residues 141–154 the composition is skewed to acidic residues; the sequence is EPEEESEDSEEEPS. The catalytic stretch occupies residues 200–495; sequence PHVRLMREKE…TDKGNKPSLP (296 aa). Zn(2+) is bound by residues Cys-292, His-344, and His-466.

This sequence belongs to the class-II aminoacyl-tRNA synthetase family. Homodimer. Zn(2+) is required as a cofactor.

It localises to the cytoplasm. It catalyses the reaction tRNA(Thr) + L-threonine + ATP = L-threonyl-tRNA(Thr) + AMP + diphosphate + H(+). Functionally, catalyzes the attachment of threonine to tRNA(Thr) in a two-step reaction: L-threonine is first activated by ATP to form Thr-AMP and then transferred to the acceptor end of tRNA(Thr). Also edits incorrectly charged L-seryl-tRNA(Thr). The sequence is that of Threonine--tRNA ligase from Methanosphaera stadtmanae (strain ATCC 43021 / DSM 3091 / JCM 11832 / MCB-3).